The following is a 221-amino-acid chain: UPF0502 protein PLES_16071 (221 aa).

Belongs to the UPF0502 family.

This Pseudomonas aeruginosa (strain LESB58) protein is UPF0502 protein PLES_16071.